Consider the following 407-residue polypeptide: Phosphopentomutase (407 aa).

Residues D10, D306, H311, D347, H348, and H359 each contribute to the Mn(2+) site.

Belongs to the phosphopentomutase family. Mn(2+) is required as a cofactor.

It is found in the cytoplasm. The catalysed reaction is 2-deoxy-alpha-D-ribose 1-phosphate = 2-deoxy-D-ribose 5-phosphate. It carries out the reaction alpha-D-ribose 1-phosphate = D-ribose 5-phosphate. It functions in the pathway carbohydrate degradation; 2-deoxy-D-ribose 1-phosphate degradation; D-glyceraldehyde 3-phosphate and acetaldehyde from 2-deoxy-alpha-D-ribose 1-phosphate: step 1/2. Isomerase that catalyzes the conversion of deoxy-ribose 1-phosphate (dRib-1-P) and ribose 1-phosphate (Rib-1-P) to deoxy-ribose 5-phosphate (dRib-5-P) and ribose 5-phosphate (Rib-5-P), respectively. The chain is Phosphopentomutase from Yersinia pestis bv. Antiqua (strain Angola).